Here is a 4655-residue protein sequence, read N- to C-terminus: Low-density lipoprotein receptor-related protein 2 (4655 aa).

Positions 1 to 25 are cleaved as a signal peptide; that stretch reads MDRGPAAVACTLLLALVACLAPASG. The Extracellular segment spans residues 26–4423; sequence QECDSAHFRC…FSKGISPGTT (4398 aa). LDL-receptor class A domains follow at residues 27–63, 66–104, 107–143, 146–180, 182–218, 221–257, and 265–308; these read ECDS…IGCA, TCQQ…QDCS, TCSS…NDCQ, TCEQ…INCT, ICLH…HACN, TCGG…DGCE, and KCSP…KYCS. Intrachain disulfides connect cysteine 28/cysteine 40, cysteine 35/cysteine 53, cysteine 47/cysteine 62, cysteine 67/cysteine 80, cysteine 74/cysteine 93, cysteine 87/cysteine 103, cysteine 108/cysteine 120, cysteine 115/cysteine 133, cysteine 127/cysteine 142, cysteine 147/cysteine 157, cysteine 152/cysteine 170, cysteine 164/cysteine 179, cysteine 183/cysteine 195, cysteine 190/cysteine 208, cysteine 202/cysteine 217, cysteine 222/cysteine 234, cysteine 229/cysteine 247, cysteine 241/cysteine 256, cysteine 266/cysteine 279, cysteine 273/cysteine 292, and cysteine 286/cysteine 307. Asparagine 159 and asparagine 178 each carry an N-linked (GlcNAc...) asparagine glycan. 5 N-linked (GlcNAc...) asparagine glycosylation sites follow: asparagine 299, asparagine 300, asparagine 341, asparagine 388, and asparagine 463. LDL-receptor class B repeat units follow at residues 436-478, 479-521, 522-568, 569-613, 753-795, 796-837, 838-881, and 882-925; these read QRVF…DWVN, NKIY…DPTV, GYLF…DMIS, KRVY…FEGQ, STIF…DWIS, KNLY…HPFA, GYLF…DWAA, and SRLY…FGEH. Asparagine 866 is a glycosylation site (N-linked (GlcNAc...) asparagine). Residues 1025–1061 enclose the LDL-receptor class A 8 domain; that stretch reads QCGLFSFPCKNGRCVPNYYLCDGVDDCHDNSDEQLCG. Intrachain disulfides connect cysteine 1026–cysteine 1038, cysteine 1033–cysteine 1051, and cysteine 1045–cysteine 1060. N-linked (GlcNAc...) asparagine glycosylation occurs at asparagine 1064. LDL-receptor class A domains follow at residues 1066 to 1102, 1108 to 1144, 1148 to 1184, 1186 to 1223, 1229 to 1267, 1270 to 1306, and 1304 to 1349; these read TCSS…HNCP, SCLD…KNCN, TCQP…VGCV, NCTA…AGCP, MCHS…NACV, TCPS…KDCP, and DCPT…PLCN. Cystine bridges form between cysteine 1067-cysteine 1079, cysteine 1074-cysteine 1092, cysteine 1086-cysteine 1101, cysteine 1109-cysteine 1121, cysteine 1116-cysteine 1134, and cysteine 1128-cysteine 1143. Residues tryptophan 1126, aspartate 1129, aspartate 1131, aspartate 1133, aspartate 1139, and glutamate 1140 each contribute to the Ca(2+) site. Asparagine 1144 carries N-linked (GlcNAc...) asparagine glycosylation. Intrachain disulfides connect cysteine 1149/cysteine 1161, cysteine 1156/cysteine 1174, and cysteine 1168/cysteine 1183. An N-linked (GlcNAc...) asparagine glycan is attached at asparagine 1186. 12 cysteine pairs are disulfide-bonded: cysteine 1187-cysteine 1200, cysteine 1194-cysteine 1213, cysteine 1207-cysteine 1222, cysteine 1230-cysteine 1243, cysteine 1237-cysteine 1256, cysteine 1250-cysteine 1266, cysteine 1271-cysteine 1283, cysteine 1278-cysteine 1296, cysteine 1290-cysteine 1305, cysteine 1305-cysteine 1325, cysteine 1312-cysteine 1338, and cysteine 1332-cysteine 1348. Ca(2+) is bound by residues aspartate 1208, valine 1210, aspartate 1212, aspartate 1218, and glutamate 1219. Residues asparagine 1327, asparagine 1340, and asparagine 1383 are each glycosylated (N-linked (GlcNAc...) asparagine). The EGF-like 1; calcium-binding domain occupies 1390-1429; the sequence is DIDECDILGSCSQHCYNMRGSFRCSCDTGYMLESDGRTCK. Disulfide bonds link cysteine 1394-cysteine 1404, cysteine 1400-cysteine 1413, and cysteine 1415-cysteine 1428. Asparagine 1464, asparagine 1496, and asparagine 1550 each carry an N-linked (GlcNAc...) asparagine glycan. LDL-receptor class B repeat units follow at residues 1478 to 1520, 1521 to 1563, 1566 to 1609, 1610 to 1654, and 1655 to 1695; these read GRIF…DWVG, RNLY…DPRM, HLLF…DYPN, RLLY…FEDS, and VYWT…VHPS. Asparagine 1675 carries an N-linked (GlcNAc...) asparagine glycan. Residues 1700–1741 form the EGF-like 2 domain; it reads SVNPCAFSRCSHLCLLSSQGPHFYSCVCPSGWSLSPDLLNCL. Intrachain disulfides connect cysteine 1704/cysteine 1713, cysteine 1709/cysteine 1725, and cysteine 1727/cysteine 1740. 5 LDL-receptor class B repeats span residues 1790–1832, 1833–1882, 1883–1930, 1931–1972, and 1973–2013; these read QYIY…DWIS, RNLY…DPAR, GKLY…DIEE, QKLY…HDSF, and LYYT…YHRR. N-linked (GlcNAc...) asparagine glycosylation is present at asparagine 1810. Asparagine 2055 carries an N-linked (GlcNAc...) asparagine glycan. LDL-receptor class B repeat units lie at residues 2107-2156, 2157-2201, 2202-2245, 2246-2289, 2431-2477, 2478-2518, 2519-2562, 2563-2604, and 2605-2646; these read GFIY…DWVA, GNLY…DPKN, RYLF…DRSD, GYVY…FENS, DRIY…DWIT, RRIY…DPCQ, GYLY…DYEE, DLLY…YGQY, and IYWT…VVKN. N-linked (GlcNAc...) asparagine glycosylation is found at asparagine 2177 and asparagine 2224. Residues asparagine 2499 and asparagine 2547 are each glycosylated (N-linked (GlcNAc...) asparagine). 10 LDL-receptor class A domains span residues 2699-2737, 2740-2776, 2779-2818, 2821-2860, 2863-2900, 2905-2944, 2947-2989, 2992-3028, 3031-3069, and 3074-3110; these read RCGA…SVCA, TCSP…AGCL, DCNA…KNCP, TCQS…TYCT, TCSS…ASCG, TCLA…HQCQ, NCSD…QNCT, TCSE…RGCL, TCQQ…HLCH, and TCPP…KGCG. 18 disulfide bridges follow: cysteine 2700–cysteine 2712, cysteine 2707–cysteine 2725, cysteine 2719–cysteine 2736, cysteine 2741–cysteine 2753, cysteine 2748–cysteine 2766, cysteine 2760–cysteine 2775, cysteine 2780–cysteine 2793, cysteine 2788–cysteine 2806, cysteine 2800–cysteine 2817, cysteine 2822–cysteine 2835, cysteine 2829–cysteine 2848, cysteine 2842–cysteine 2859, cysteine 2864–cysteine 2876, cysteine 2871–cysteine 2889, cysteine 2883–cysteine 2899, cysteine 2906–cysteine 2918, cysteine 2913–cysteine 2931, and cysteine 2925–cysteine 2943. Asparagine 2781 carries N-linked (GlcNAc...) asparagine glycosylation. N-linked (GlcNAc...) asparagine glycosylation is found at asparagine 2809 and asparagine 2810. A glycan (N-linked (GlcNAc...) asparagine) is linked at asparagine 2947. Cystine bridges form between cysteine 2948–cysteine 2965, cysteine 2955–cysteine 2978, cysteine 2972–cysteine 2988, cysteine 2993–cysteine 3005, cysteine 3000–cysteine 3018, cysteine 3012–cysteine 3027, cysteine 3032–cysteine 3044, cysteine 3039–cysteine 3057, cysteine 3051–cysteine 3068, cysteine 3075–cysteine 3087, cysteine 3082–cysteine 3100, cysteine 3094–cysteine 3109, cysteine 3114–cysteine 3126, cysteine 3122–cysteine 3135, cysteine 3137–cysteine 3150, cysteine 3156–cysteine 3167, cysteine 3163–cysteine 3176, and cysteine 3178–cysteine 3191. N-linked (GlcNAc...) asparagine glycosylation occurs at asparagine 2987. The EGF-like 3 domain occupies 3110 to 3151; it reads GINECHDPSISGCDHNCTDTLTSFYCSCRPGYKLMSDKRTCV. N-linked (GlcNAc...) asparagine glycosylation occurs at asparagine 3125. Residues 3152–3192 enclose the EGF-like 4; calcium-binding domain; the sequence is DIDECTEMPFVCSQKCENVIGSYICKCAPGYLREPDGKTCR. N-linked (GlcNAc...) asparagine glycans are attached at residues asparagine 3211, asparagine 3257, asparagine 3315, and asparagine 3355. LDL-receptor class B repeat units lie at residues 3239–3281, 3282–3324, 3333–3376, 3377–3419, and 3420–3460; these read KRLY…DWVS, RKLY…DNPR, GYLY…DYTN, DLLY…FEDT, and IYWT…YHPY. Asparagine 3446 carries N-linked (GlcNAc...) asparagine glycosylation. LDL-receptor class A domains lie at 3511–3549, 3552–3590, 3593–3631, 3634–3672, 3677–3715, 3718–3755, 3758–3794, 3797–3833, 3841–3879, 3882–3921, and 3927–3963; these read MCSS…ALCP, FCRL…LLCE, HCDS…SHCA, TCRP…EECM, LCDN…QGCE, TCHP…ENCA, ECTE…RDCE, TCHP…ADCP, YCQA…HLCL, PCNS…EHCR, and PCTE…LGCN. 33 cysteine pairs are disulfide-bonded: cysteine 3512/cysteine 3525, cysteine 3519/cysteine 3538, cysteine 3532/cysteine 3548, cysteine 3553/cysteine 3565, cysteine 3560/cysteine 3578, cysteine 3572/cysteine 3589, cysteine 3594/cysteine 3606, cysteine 3601/cysteine 3619, cysteine 3613/cysteine 3630, cysteine 3635/cysteine 3647, cysteine 3642/cysteine 3660, cysteine 3654/cysteine 3671, cysteine 3678/cysteine 3692, cysteine 3686/cysteine 3705, cysteine 3699/cysteine 3714, cysteine 3719/cysteine 3732, cysteine 3727/cysteine 3745, cysteine 3739/cysteine 3754, cysteine 3759/cysteine 3771, cysteine 3766/cysteine 3784, cysteine 3778/cysteine 3793, cysteine 3798/cysteine 3810, cysteine 3805/cysteine 3823, cysteine 3817/cysteine 3832, cysteine 3842/cysteine 3854, cysteine 3849/cysteine 3867, cysteine 3861/cysteine 3878, cysteine 3883/cysteine 3896, cysteine 3891/cysteine 3909, cysteine 3903/cysteine 3920, cysteine 3928/cysteine 3940, cysteine 3935/cysteine 3953, and cysteine 3947/cysteine 3962. Asparagine 3564 carries N-linked (GlcNAc...) asparagine glycosylation. Residue asparagine 3680 is glycosylated (N-linked (GlcNAc...) asparagine). N-linked (GlcNAc...) asparagine glycosylation is present at asparagine 3978. Residues 4007-4048 enclose the EGF-like 5; calcium-binding domain; sequence DINECEQFGTCPQHCRNTKGSYECVCADGFTSMSDRPGKRCA. Intrachain disulfides connect cysteine 4011–cysteine 4021, cysteine 4017–cysteine 4030, and cysteine 4032–cysteine 4047. An N-linked (GlcNAc...) asparagine glycan is attached at asparagine 4068. LDL-receptor class B repeat units follow at residues 4154-4196, 4197-4240, and 4242-4283; these read RHIY…NPKL, GLMF…DYLN, and DRIY…FEDQ. An N-linked (GlcNAc...) asparagine glycan is attached at asparagine 4327. In terms of domain architecture, EGF-like 6 spans 4377–4411; sequence LPPPCRCMHGGNCYFDETDLPKCKCPSGYTGKYCE. Intrachain disulfides connect cysteine 4381-cysteine 4389, cysteine 4383-cysteine 4399, and cysteine 4401-cysteine 4410. Residues 4424–4446 form a helical membrane-spanning segment; it reads AVAVLLTILLIVVIGALAIAGFF. The Cytoplasmic segment spans residues 4447–4655; the sequence is HYRRTGSLLP…ANLVKEDSEV (209 aa). The SH3-binding signature appears at 4453 to 4462; it reads SLLPALPKLP. A PxLPxI/L motif 1; mediates interaction with ANKRA2 motif is present at residues 4456-4461; it reads PALPKL. The short motif at 4459–4464 is the PxLPxI/L motif 2; mediates interaction with ANKRA2 element; that stretch reads PKLPSL. 2 positions are modified to phosphoserine: serine 4463 and serine 4466. The Endocytosis signal motif lies at 4521–4526; it reads FENPMY. The tract at residues 4550 to 4574 is disordered; the sequence is KNYGSPINPSEIVPETNPTSPAADG. A compositionally biased stretch (polar residues) spans 4565–4574; sequence TNPTSPAADG. Serine 4569 is modified (phosphoserine). Residues 4589–4602 form an interaction with DAB2 region; that stretch reads QTTNFENPIYAQME. The NPXY motif motif lies at 4595-4598; it reads NPIY. The SH2-binding motif lies at 4598–4601; sequence YAQM. Positions 4601–4655 are disordered; it reads MENEQKESVAATPPPSPSLPAKPKPPSRRDPTPTYSATEDTFKDTANLVKEDSEV. Positions 4611 to 4622 match the SH3-binding motif; sequence ATPPPSPSLPAK. Positions 4612–4624 are enriched in pro residues; sequence TPPPSPSLPAKPK. Position 4616 is a phosphoserine (serine 4616). Position 4632 is a phosphothreonine (threonine 4632). Serine 4653 carries the post-translational modification Phosphoserine.

It belongs to the LDLR family. Binds plasminogen, extracellular matrix components, plasminogen activator-plasminogen activator inhibitor type I complex, apolipoprotein E-enriched beta-VLDL, lipoprotein lipase, lactoferrin, CLU/clusterin and calcium. Forms a multimeric complex together with LRPAP1. Interacts (via PxLPxI/L motif) with ANKRA2 (via ankyrin repeats). Interacts with LRP2BP. Interacts (via NPXY motif) with DAB2; the interaction is not affected by tyrosine phosphorylation of the NPXY motif. Interacts with MB. Interacts with BMP4. Interacts with the Sonic hedgehog protein N-product which is the active product of SHH. Interacts with CST3 in a calcium-dependent manner. Interacts with the vitamin-D binding protein GC/DBP. Interacts with sex hormone-binding protein SHBG. Interacts with angiotensin-2. Also interacts with angiotensin 1-7. Interacts with APOM. Interacts with selenoprotein SEPP1. Interacts with LEP. Interacts with ALB. Interacts with the antiapoptotic protein BIRC5/survivin. Interacts with matrix metalloproteinase MMP2 in complex with metalloproteinase inhibitor TIMP1. In neurons, forms a trimeric complex with APP and APPB1/FE65. Interacts with LDLRAP1/ARH; mediates trafficking of LRP2 to the endocytic recycling compartment. Does not interact with beta-amyloid protein 40 alone but interacts with the complex composed of beta-amyloid protein 40 and CLU/APOJ. Interacts with MDK. A fraction undergoes proteolytic cleavage of the extracellular domain at the cell membrane to generate a cytoplasmic tail fragment. This is internalized into the early endosome from where it trafficks in an LDLRAP1/ARH-dependent manner to the endocytic recycling compartment (ERC). In the ERC, it is further cleaved by gamma-secretase to release a fragment which translocates to the nucleus and mediates transcriptional repression. Post-translationally, N-glycosylation is required for ligand binding. Expressed in first and third trimester cytotrophoblasts in the placenta (at protein level). Absorptive epithelia, including renal proximal tubules.

The protein localises to the apical cell membrane. The protein resides in the endosome lumen. It is found in the membrane. Its subcellular location is the coated pit. It localises to the cell projection. The protein localises to the dendrite. The protein resides in the axon. Functionally, multiligand endocytic receptor. Acts together with CUBN to mediate endocytosis of high-density lipoproteins. Mediates receptor-mediated uptake of polybasic drugs such as aprotinin, aminoglycosides and polymyxin B. In the kidney, mediates the tubular uptake and clearance of leptin. Also mediates transport of leptin across the blood-brain barrier through endocytosis at the choroid plexus epithelium. Endocytosis of leptin in neuronal cells is required for hypothalamic leptin signaling and leptin-mediated regulation of feeding and body weight. Mediates endocytosis and subsequent lysosomal degradation of CST3 in kidney proximal tubule cells. Mediates renal uptake of 25-hydroxyvitamin D3 in complex with the vitamin D3 transporter GC/DBP. Mediates renal uptake of metallothionein-bound heavy metals. Together with CUBN, mediates renal reabsorption of myoglobin. Mediates renal uptake and subsequent lysosomal degradation of APOM. Plays a role in kidney selenium homeostasis by mediating renal endocytosis of selenoprotein SEPP1. Mediates renal uptake of the antiapoptotic protein BIRC5/survivin which may be important for functional integrity of the kidney. Mediates renal uptake of matrix metalloproteinase MMP2 in complex with metalloproteinase inhibitor TIMP1. Mediates endocytosis of Sonic hedgehog protein N-product (ShhN), the active product of SHH. Also mediates ShhN transcytosis. In the embryonic neuroepithelium, mediates endocytic uptake and degradation of BMP4, is required for correct SHH localization in the ventral neural tube and plays a role in patterning of the ventral telencephalon. Required at the onset of neurulation to sequester SHH on the apical surface of neuroepithelial cells of the rostral diencephalon ventral midline and to control PTCH1-dependent uptake and intracellular trafficking of SHH. During neurulation, required in neuroepithelial cells for uptake of folate bound to the folate receptor FOLR1 which is necessary for neural tube closure. In the adult brain, negatively regulates BMP signaling in the subependymal zone which enables neurogenesis to proceed. In astrocytes, mediates endocytosis of ALB which is required for the synthesis of the neurotrophic factor oleic acid. Involved in neurite branching. During optic nerve development, required for SHH-mediated migration and proliferation of oligodendrocyte precursor cells. Mediates endocytic uptake and clearance of SHH in the retinal margin which protects retinal progenitor cells from mitogenic stimuli and keeps them quiescent. Plays a role in reproductive organ development by mediating uptake in reproductive tissues of androgen and estrogen bound to the sex hormone binding protein SHBG. Mediates endocytosis of angiotensin-2. Also mediates endocytosis of angiotensis 1-7. Binds to the complex composed of beta-amyloid protein 40 and CLU/APOJ and mediates its endocytosis and lysosomal degradation. Required for embryonic heart development. Required for normal hearing, possibly through interaction with estrogen in the inner ear. The chain is Low-density lipoprotein receptor-related protein 2 from Homo sapiens (Human).